We begin with the raw amino-acid sequence, 163 residues long: Allophycocyanin alpha-B chain (163 aa).

Asn-71 carries the N4-methylasparagine modification. Cys-81 provides a ligand contact to (2R,3E)-phycocyanobilin.

The protein belongs to the phycobiliprotein family. In terms of processing, contains one covalently linked bilin chromophore.

The protein resides in the plastid. It is found in the chloroplast thylakoid membrane. Functionally, allophycocyanin is a photosynthetic bile pigment-protein complex with maximum absorption at approximately 650 nanometers. The polypeptide is Allophycocyanin alpha-B chain (apcD) (Cyanidium caldarium (Red alga)).